We begin with the raw amino-acid sequence, 122 residues long: Flagellar protein FliT (122 aa).

The required for homodimerization stretch occupies residues 1-50 (MERQQQLLAAYQQIHSLSSQMIALAQTERWEDLVELELAYVTAVESTAAF). Positions 60–98 (LQELLRNKLQQILDNETELKRLLQQRMDQLKELIGQSTR) are fliD binding.

The protein belongs to the FliT family. Homodimer. Interacts with FliD and FlhC.

It is found in the cytoplasm. It localises to the cytosol. Its function is as follows. Dual-function protein that regulates the transcription of class 2 flagellar operons and that also acts as an export chaperone for the filament-capping protein FliD. As a transcriptional regulator, acts as an anti-FlhDC factor; it directly binds FlhC, thus inhibiting the binding of the FlhC/FlhD complex to class 2 promoters, resulting in decreased expression of class 2 flagellar operons. As a chaperone, effects FliD transition to the membrane by preventing its premature polymerization, and by directing it to the export apparatus. The sequence is that of Flagellar protein FliT from Serratia proteamaculans (strain 568).